Here is a 207-residue protein sequence, read N- to C-terminus: FMN-dependent NADH:quinone oxidoreductase 2 (207 aa).

FMN contacts are provided by residues serine 9, 15 to 17 (SAS), and 97 to 100 (MWNF).

Belongs to the azoreductase type 1 family. In terms of assembly, homodimer. Requires FMN as cofactor.

It catalyses the reaction 2 a quinone + NADH + H(+) = 2 a 1,4-benzosemiquinone + NAD(+). The enzyme catalyses N,N-dimethyl-1,4-phenylenediamine + anthranilate + 2 NAD(+) = 2-(4-dimethylaminophenyl)diazenylbenzoate + 2 NADH + 2 H(+). Functionally, quinone reductase that provides resistance to thiol-specific stress caused by electrophilic quinones. Also exhibits azoreductase activity. Catalyzes the reductive cleavage of the azo bond in aromatic azo compounds to the corresponding amines. The sequence is that of FMN-dependent NADH:quinone oxidoreductase 2 from Burkholderia lata (strain ATCC 17760 / DSM 23089 / LMG 22485 / NCIMB 9086 / R18194 / 383).